The chain runs to 405 residues: Multi-drug resistance efflux pump PmrA homolog (405 aa).

A run of 12 helical transmembrane segments spans residues 13 to 33 (LFIT…VMPF), 50 to 70 (LYSG…APIW), 88 to 108 (IVMT…WLLG), 111 to 131 (LLMG…ASQA), 147 to 167 (MVSG…WFGM), 170 to 190 (VFLI…FFVH), 216 to 236 (ILFG…SIEP), 254 to 274 (FISG…SSFL), 286 to 306 (LILI…FVQS), 308 to 328 (LQLG…TPSV), 350 to 370 (MCSN…AGYI), and 374 to 394 (AAIV…FINF).

It belongs to the major facilitator superfamily. TCR/Tet family.

It is found in the cell membrane. Efflux pump for various substrates. This chain is Multi-drug resistance efflux pump PmrA homolog (pmrA), found in Lactococcus lactis subsp. lactis (strain IL1403) (Streptococcus lactis).